A 231-amino-acid chain; its full sequence is Somatolactin-2 (231 aa).

Residues 1–24 form the signal peptide; sequence MRMMRAIKQGQWAILLWPYLLTTS. 3 disulfides stabilise this stretch: Cys-29-Cys-39, Cys-89-Cys-205, and Cys-222-Cys-230. N-linked (GlcNAc...) asparagine glycosylation is present at Asn-145.

It belongs to the somatotropin/prolactin family. As to expression, pituitary gland.

The protein resides in the secreted. In Sparus aurata (Gilthead sea bream), this protein is Somatolactin-2.